We begin with the raw amino-acid sequence, 185 residues long: Large ribosomal subunit protein uL5 (185 aa).

Belongs to the universal ribosomal protein uL5 family. As to quaternary structure, part of the 50S ribosomal subunit; part of the 5S rRNA/L5/L18/L25 subcomplex. Contacts the 5S rRNA and the P site tRNA. Forms a bridge to the 30S subunit in the 70S ribosome.

This is one of the proteins that bind and probably mediate the attachment of the 5S RNA into the large ribosomal subunit, where it forms part of the central protuberance. In the 70S ribosome it contacts protein S13 of the 30S subunit (bridge B1b), connecting the 2 subunits; this bridge is implicated in subunit movement. Contacts the P site tRNA; the 5S rRNA and some of its associated proteins might help stabilize positioning of ribosome-bound tRNAs. The sequence is that of Large ribosomal subunit protein uL5 from Afipia carboxidovorans (strain ATCC 49405 / DSM 1227 / KCTC 32145 / OM5) (Oligotropha carboxidovorans).